We begin with the raw amino-acid sequence, 524 residues long: N-acetylgalactosamine-6-sulfatase (524 aa).

An N-terminal signal peptide occupies residues M1–G27. Positions A28–D381 are catalytic domain. Ca(2+) contacts are provided by D40, D41, and C80. Residue C80 is the Nucleophile of the active site. C80 is modified (3-oxoalanine (Cys)). H143 is an active-site residue. The N-linked (GlcNAc...) asparagine glycan is linked to N205. Residues D290 and N291 each coordinate Ca(2+). An intrachain disulfide couples C310 to C421. N425 carries N-linked (GlcNAc...) asparagine glycosylation. Disulfide bonds link C491-C520 and C503-C509.

Belongs to the sulfatase family. Homodimer. The cofactor is Ca(2+). The conversion to 3-oxoalanine (also known as C-formylglycine, FGly), of a serine or cysteine residue in prokaryotes and of a cysteine residue in eukaryotes, is critical for catalytic activity.

It is found in the lysosome. The catalysed reaction is Hydrolysis of the 6-sulfate groups of the N-acetyl-D-galactosamine 6-sulfate units of chondroitin sulfate and of the D-galactose 6-sulfate units of keratan sulfate.. The polypeptide is N-acetylgalactosamine-6-sulfatase (Galns) (Rattus norvegicus (Rat)).